A 177-amino-acid polypeptide reads, in one-letter code: Glutamyl-tRNA(Gln) amidotransferase subunit F, mitochondrial (177 aa).

The transit peptide at 1 to 16 directs the protein to the mitochondrion; that stretch reads MIRINSRGLTVSTRRF. A disordered region spans residues 148-177; the sequence is PAKGETQGSFNVANMNPRNRPFATIRSKQG. Positions 153-164 are enriched in polar residues; the sequence is TQGSFNVANMNP.

It belongs to the GatF family. As to quaternary structure, subunit of the heterotrimeric GatFAB amidotransferase (AdT) complex, composed of A, B and F subunits.

It localises to the mitochondrion inner membrane. It catalyses the reaction L-glutamyl-tRNA(Gln) + L-glutamine + ATP + H2O = L-glutaminyl-tRNA(Gln) + L-glutamate + ADP + phosphate + H(+). Allows the formation of correctly charged Gln-tRNA(Gln) through the transamidation of misacylated Glu-tRNA(Gln) in the mitochondria. The reaction takes place in the presence of glutamine and ATP through an activated gamma-phospho-Glu-tRNA(Gln). Required for proper protein synthesis within the mitochondrion. The chain is Glutamyl-tRNA(Gln) amidotransferase subunit F, mitochondrial from Scheffersomyces stipitis (strain ATCC 58785 / CBS 6054 / NBRC 10063 / NRRL Y-11545) (Yeast).